Consider the following 454-residue polypeptide: Glutamine synthetase (454 aa).

In terms of domain architecture, GS beta-grasp spans 19–111 (NNVKFIRFQF…VICDVYKDEK (93 aa)). Positions 118–454 (PRSRLKAILE…DWETGKYLIY (337 aa)) constitute a GS catalytic domain. E142 and E144 together coordinate Mg(2+). Residue E194 coordinates ATP. Mg(2+) contacts are provided by E199 and E206. Residues 250-251 (NG) and G251 contribute to the L-glutamate site. Residue H255 coordinates Mg(2+). ATP is bound by residues 257–259 (HQS) and S259. Residues R309, E315, and R327 each coordinate L-glutamate. The ATP site is built by R327, R332, and K339. A Mg(2+)-binding site is contributed by E344. L-glutamate is bound at residue R346.

The protein belongs to the glutamine synthetase family. As to quaternary structure, oligomer of 12 subunits arranged in the form of two hexagons. Mg(2+) is required as a cofactor.

Its subcellular location is the cytoplasm. It catalyses the reaction L-glutamate + NH4(+) + ATP = L-glutamine + ADP + phosphate + H(+). Its activity is regulated as follows. Feedback inhibited by glycine and alanine, and inhibited by low concentrations of methionine sulfoximine. In terms of biological role, probably involved in nitrogen metabolism via ammonium assimilation. Catalyzes the ATP-dependent biosynthesis of glutamine from glutamate and ammonia. Beta-glutamate is a much poorer substrate than alpha-glutamate. This chain is Glutamine synthetase, found in Methanocaldococcus jannaschii (strain ATCC 43067 / DSM 2661 / JAL-1 / JCM 10045 / NBRC 100440) (Methanococcus jannaschii).